Consider the following 99-residue polypeptide: Seminal vesicle secretory protein 6 (99 aa).

Residues 1-21 form the signal peptide; it reads MSPTSFFLLTMLLVLVTETAA.

It belongs to the SVP2/SVP5/SVP6 family. In terms of tissue distribution, testis.

The protein resides in the secreted. The protein localises to the extracellular space. This Mus musculus (Mouse) protein is Seminal vesicle secretory protein 6 (Svs6).